The chain runs to 132 residues: Auxin-responsive protein SAUR72 (132 aa).

The segment at 22–54 (SDSQRPSRRSESFLRSSVTRRSKKQTSSVPEGH) is disordered. The segment covering 23 to 33 (DSQRPSRRSES) has biased composition (basic and acidic residues).

It belongs to the ARG7 family. As to quaternary structure, interacts with and inhibits PP2C-D subfamily of type 2C phosphatases such as PP2C67/PP2C-D1. As to expression, highly expressed in the steles of roots and hypocotyls.

It localises to the cytoplasm. In terms of biological role, provide a mechanistic link between auxin and plasma membrane H(+)-ATPases (PM H(+)-ATPases, e.g. AHA1 and AHA2), and triggers PM H(+)-ATPases activity by promoting phosphorylation of their C-terminal autoinhibitory domain as a result of PP2C-D subfamily of type 2C phosphatases inhibition, thus leading to the acidification of the apoplast and the facilitation of solutes and water uptake to drive cell expansion. Plays a role in the regulation of cell expansion, root meristem patterning and auxin transport. The chain is Auxin-responsive protein SAUR72 from Arabidopsis thaliana (Mouse-ear cress).